Consider the following 220-residue polypeptide: MSSLSKEAALVHEALLARGLETPLRGEPLARDTRKAQIEAHMTEVMRLLNLDLSDDSLVETPSRIAKMYVDEIFSGLDYANFPKITIIENKMDVDEMVTVRDITLTSTCEHHFVTIDGKATVAYIPKERVIGLSKINRIVRFFAQRPQVQERLTQQILVALQTLLGTKNVAVSIDAVHYCVKARGVRDATSATTTTSLGGLFKTSQNTRQEFLRAVRHHV.

The Zn(2+) site is built by Cys109, His112, and Cys180.

The protein belongs to the GTP cyclohydrolase I family. In terms of assembly, homomer.

It catalyses the reaction GTP + H2O = 7,8-dihydroneopterin 3'-triphosphate + formate + H(+). It participates in cofactor biosynthesis; 7,8-dihydroneopterin triphosphate biosynthesis; 7,8-dihydroneopterin triphosphate from GTP: step 1/1. The chain is GTP cyclohydrolase 1 from Edwardsiella ictaluri (strain 93-146).